The following is a 381-amino-acid chain: MIISSASDYREAARRRVPPFMFHYADGGSYAEQTLARNVSDLENIALRQRVLKDMSELDTSIELFGEKLSMPTILAPVGACGMYARRGEVQAAQAADNKGVPFTLSTVSICPIEEVAPAIKRPMWFQLYVLKDRGFMKNALERAKAAGCSTLVFTVDMPTPGARYRDMHSGMSGPYKEIRRVLQGFTHPFWAYDVGIKGKPHTLGNVSTYMGRQIGLDDYIGWLTENFDPSISWKDLEWIREFWEGPMVIKGILDPEDAKDAVRFGADGIVVSNHGGRQLDGVLSSARALPPIADAVKGDIKIIADSGIRNGLDIVRMLALGADATMLGRAFVYALGAAGRQGVENMLDIFKKEMRVAMTLTSNRTIVDIKPEALVDLSKL.

The FMN hydroxy acid dehydrogenase domain occupies 1-380 (MIISSASDYR…KPEALVDLSK (380 aa)). Tyr-24 is a binding site for substrate. Residues Ser-106 and Gln-127 each coordinate FMN. Tyr-129 is a substrate binding site. Thr-155 contacts FMN. Arg-164 is a binding site for substrate. Lys-251 is an FMN binding site. His-275 functions as the Proton acceptor in the catalytic mechanism. Arg-278 serves as a coordination point for substrate. 306–330 (DSGIRNGLDIVRMLALGADATMLGR) contacts FMN.

This sequence belongs to the FMN-dependent alpha-hydroxy acid dehydrogenase family. FMN is required as a cofactor.

Its subcellular location is the cell inner membrane. It carries out the reaction (S)-lactate + A = pyruvate + AH2. Functionally, catalyzes the conversion of L-lactate to pyruvate. Is coupled to the respiratory chain. This is L-lactate dehydrogenase from Haemophilus influenzae (strain 86-028NP).